Reading from the N-terminus, the 1196-residue chain is Tubulin-specific chaperone D (1196 aa).

4 HEAT repeats span residues 363–401 (VIEQLLVGLKDKDTVVRWSAAKGIGRMAGRLPRELADDV), 599–634 (YIAMHVFPALLLMTQSPDLHTRHGAILACAEVTYAL), 752–788 (SSIAKELIPQYLAELQSPEEMARCGFSSALGALPGFL), and 1106–1142 (GDVRKKILLQLFLLLGHPFPVIRKSTASQVYEMVLTY).

It belongs to the TBCD family. Found in a complex with at least ARL2, PPP2CB, PPP2R1A, PPP2R2A, PPP2R5E and TBCD. Interacts with PPP2CB. Part of a supercomplex made of cofactors A to E. Cofactors A and D function by capturing and stabilizing tubulin in a quasi-native conformation. Cofactor E binds to the cofactor D-tubulin complex; interaction with cofactor C then causes the release of tubulin polypeptides that are committed to the native state. Interacts with ARL2; interaction is enhanced with the GDP-bound form of ARL2. Does not interact with ARL3, ARL4A and ARL4D. Interacts with beta tubulin. Interacts with TBCE.

The protein resides in the cell junction. Its subcellular location is the tight junction. It localises to the lateral cell membrane. The protein localises to the cytoplasm. It is found in the adherens junction. The protein resides in the cytoskeleton. Its subcellular location is the microtubule organizing center. It localises to the centrosome. In terms of biological role, tubulin-folding protein implicated in the first step of the tubulin folding pathway and required for tubulin complex assembly. Involved in the regulation of microtubule polymerization or depolymerization, it modulates microtubule dynamics by capturing GTP-bound beta-tubulin (TUBB). Its ability to interact with beta tubulin is regulated via its interaction with ARL2. Acts as a GTPase-activating protein (GAP) for ARL2. Induces microtubule disruption in absence of ARL2. Increases degradation of beta tubulin, when overexpressed in polarized cells. Promotes epithelial cell detachment, a process antagonized by ARL2. Induces tight adherens and tight junctions disassembly at the lateral cell membrane. Required for correct assembly and maintenance of the mitotic spindle, and proper progression of mitosis. Involved in neuron morphogenesis. The chain is Tubulin-specific chaperone D (Tbcd) from Mus musculus (Mouse).